The chain runs to 344 residues: Serpentine receptor class H-72 (344 aa).

Transmembrane regions (helical) follow at residues 30-50 (GLAF…FFTG), 66-86 (LSLV…SFFI), 110-132 (TVVQ…TLLF), 155-175 (WLAG…FNLA), 221-241 (SIYM…LVIV), 259-279 (YGLI…SVLI), and 292-312 (LVSI…LLVH).

It belongs to the nematode receptor-like protein srh family.

Its subcellular location is the membrane. This Caenorhabditis elegans protein is Serpentine receptor class H-72 (srh-72).